A 315-amino-acid chain; its full sequence is Glycine--tRNA ligase alpha subunit (315 aa).

The protein belongs to the class-II aminoacyl-tRNA synthetase family. As to quaternary structure, tetramer of two alpha and two beta subunits.

The protein resides in the cytoplasm. It catalyses the reaction tRNA(Gly) + glycine + ATP = glycyl-tRNA(Gly) + AMP + diphosphate. The sequence is that of Glycine--tRNA ligase alpha subunit from Pseudomonas paraeruginosa (strain DSM 24068 / PA7) (Pseudomonas aeruginosa (strain PA7)).